The sequence spans 908 residues: Isoleucine--tRNA ligase (908 aa).

The short motif at 59–69 is the 'HIGH' region element; the sequence is PYANGDLHIGH. Residue E554 coordinates L-isoleucyl-5'-AMP. Residues 595-599 carry the 'KMSKS' region motif; it reads KMSKS. Position 598 (K598) interacts with ATP. 4 residues coordinate Zn(2+): C882, C885, C898, and C901.

Belongs to the class-I aminoacyl-tRNA synthetase family. IleS type 1 subfamily. As to quaternary structure, monomer. The cofactor is Zn(2+).

The protein resides in the cytoplasm. It carries out the reaction tRNA(Ile) + L-isoleucine + ATP = L-isoleucyl-tRNA(Ile) + AMP + diphosphate. Catalyzes the attachment of isoleucine to tRNA(Ile). As IleRS can inadvertently accommodate and process structurally similar amino acids such as valine, to avoid such errors it has two additional distinct tRNA(Ile)-dependent editing activities. One activity is designated as 'pretransfer' editing and involves the hydrolysis of activated Val-AMP. The other activity is designated 'posttransfer' editing and involves deacylation of mischarged Val-tRNA(Ile). This Mesoplasma florum (strain ATCC 33453 / NBRC 100688 / NCTC 11704 / L1) (Acholeplasma florum) protein is Isoleucine--tRNA ligase.